Consider the following 152-residue polypeptide: Deoxyuridine 5'-triphosphate nucleotidohydrolase (152 aa).

Substrate contacts are provided by residues 72 to 74, Asn-85, and 89 to 91; these read RSG and TVD.

This sequence belongs to the dUTPase family. It depends on Mg(2+) as a cofactor.

The catalysed reaction is dUTP + H2O = dUMP + diphosphate + H(+). It functions in the pathway pyrimidine metabolism; dUMP biosynthesis; dUMP from dCTP (dUTP route): step 2/2. In terms of biological role, this enzyme is involved in nucleotide metabolism: it produces dUMP, the immediate precursor of thymidine nucleotides and it decreases the intracellular concentration of dUTP so that uracil cannot be incorporated into DNA. The polypeptide is Deoxyuridine 5'-triphosphate nucleotidohydrolase (Nitrobacter winogradskyi (strain ATCC 25391 / DSM 10237 / CIP 104748 / NCIMB 11846 / Nb-255)).